A 149-amino-acid polypeptide reads, in one-letter code: Large ribosomal subunit protein bL9 (149 aa).

The protein belongs to the bacterial ribosomal protein bL9 family.

Functionally, binds to the 23S rRNA. This is Large ribosomal subunit protein bL9 from Histophilus somni (strain 129Pt) (Haemophilus somnus).